Consider the following 231-residue polypeptide: Ribose-5-phosphate isomerase A (231 aa).

Substrate-binding positions include 32–35 (TGST), 85–88 (DGAD), and 98–101 (KGGG). Catalysis depends on glutamate 107, which acts as the Proton acceptor. Lysine 125 contributes to the substrate binding site.

It belongs to the ribose 5-phosphate isomerase family. In terms of assembly, homodimer.

It carries out the reaction aldehydo-D-ribose 5-phosphate = D-ribulose 5-phosphate. Its pathway is carbohydrate degradation; pentose phosphate pathway; D-ribose 5-phosphate from D-ribulose 5-phosphate (non-oxidative stage): step 1/1. Functionally, catalyzes the reversible conversion of ribose-5-phosphate to ribulose 5-phosphate. The polypeptide is Ribose-5-phosphate isomerase A (Burkholderia orbicola (strain MC0-3)).